Reading from the N-terminus, the 237-residue chain is N-(5'-phosphoribosyl)anthranilate isomerase (237 aa).

The protein belongs to the TrpF family.

It catalyses the reaction N-(5-phospho-beta-D-ribosyl)anthranilate = 1-(2-carboxyphenylamino)-1-deoxy-D-ribulose 5-phosphate. The protein operates within amino-acid biosynthesis; L-tryptophan biosynthesis; L-tryptophan from chorismate: step 3/5. This chain is N-(5'-phosphoribosyl)anthranilate isomerase, found in Desulfitobacterium hafniense (strain DSM 10664 / DCB-2).